The sequence spans 106 residues: Thiosulfate sulfurtransferase GlpE (106 aa).

In terms of domain architecture, Rhodanese spans 16-104; the sequence is REQGAVLVDV…WRATYPDETV (89 aa). Residue cysteine 64 is the Cysteine persulfide intermediate of the active site.

The protein belongs to the GlpE family.

Its subcellular location is the cytoplasm. The enzyme catalyses thiosulfate + hydrogen cyanide = thiocyanate + sulfite + 2 H(+). It carries out the reaction thiosulfate + [thioredoxin]-dithiol = [thioredoxin]-disulfide + hydrogen sulfide + sulfite + 2 H(+). Its function is as follows. Transferase that catalyzes the transfer of sulfur from thiosulfate to thiophilic acceptors such as cyanide or dithiols. May function in a CysM-independent thiosulfate assimilation pathway by catalyzing the conversion of thiosulfate to sulfite, which can then be used for L-cysteine biosynthesis. The protein is Thiosulfate sulfurtransferase GlpE of Pseudomonas savastanoi pv. phaseolicola (strain 1448A / Race 6) (Pseudomonas syringae pv. phaseolicola (strain 1448A / Race 6)).